The primary structure comprises 745 residues: Translation initiation factor IF-2 (745 aa).

The interval 1–154 (MSDKPRRDTG…PAARPVVRPR (154 aa)) is disordered. Over residues 36–56 (TGRSPNASTGGNRSAGNQAGN) the composition is skewed to polar residues. The segment covering 68 to 98 (ATTPAPNRNTPPAGARQGGAANARTGTPPVA) has biased composition (low complexity). The segment covering 99 to 113 (RGGGGGVTPPTGRGG) has biased composition (gly residues). Low complexity predominate over residues 114 to 126 (NNPRAARNQPRSR). The span at 127-138 (QQPEEREREHVL) shows a compositional bias: basic and acidic residues. The region spanning 241–410 (PRPPVVTIMG…LLVADLEDLR (170 aa)) is the tr-type G domain. Residues 250–257 (GHVDHGKT) are G1. Residue 250–257 (GHVDHGKT) coordinates GTP. Residues 275-279 (GITQH) form a G2 region. Positions 296-299 (DTPG) are G3. Residues 296-300 (DTPGH) and 350-353 (NKID) contribute to the GTP site. The segment at 350–353 (NKID) is G4. The interval 386–388 (SAR) is G5.

The protein belongs to the TRAFAC class translation factor GTPase superfamily. Classic translation factor GTPase family. IF-2 subfamily.

The protein resides in the cytoplasm. One of the essential components for the initiation of protein synthesis. Protects formylmethionyl-tRNA from spontaneous hydrolysis and promotes its binding to the 30S ribosomal subunits. Also involved in the hydrolysis of GTP during the formation of the 70S ribosomal complex. The protein is Translation initiation factor IF-2 of Chloroflexus aurantiacus (strain ATCC 29366 / DSM 635 / J-10-fl).